The sequence spans 195 residues: Holliday junction branch migration complex subunit RuvA (195 aa).

Residues 1 to 64 form a domain I region; sequence MIKGVEGEIT…DRAPEIYGFK (64 aa). The domain II stretch occupies residues 65-137; sequence DRAEYNVFLM…LYDLVKDYAV (73 aa). A flexible linker region spans residues 137-141; sequence VEFPK. The interval 142-195 is domain III; sequence ELSDVSEDAVGALTALGFDMTSAKLAVNEVLKEQTVENTQELVRKALRKLNKTR.

Belongs to the RuvA family. As to quaternary structure, homotetramer. Forms an RuvA(8)-RuvB(12)-Holliday junction (HJ) complex. HJ DNA is sandwiched between 2 RuvA tetramers; dsDNA enters through RuvA and exits via RuvB. An RuvB hexamer assembles on each DNA strand where it exits the tetramer. Each RuvB hexamer is contacted by two RuvA subunits (via domain III) on 2 adjacent RuvB subunits; this complex drives branch migration. In the full resolvosome a probable DNA-RuvA(4)-RuvB(12)-RuvC(2) complex forms which resolves the HJ.

The protein localises to the cytoplasm. In terms of biological role, the RuvA-RuvB-RuvC complex processes Holliday junction (HJ) DNA during genetic recombination and DNA repair, while the RuvA-RuvB complex plays an important role in the rescue of blocked DNA replication forks via replication fork reversal (RFR). RuvA specifically binds to HJ cruciform DNA, conferring on it an open structure. The RuvB hexamer acts as an ATP-dependent pump, pulling dsDNA into and through the RuvAB complex. HJ branch migration allows RuvC to scan DNA until it finds its consensus sequence, where it cleaves and resolves the cruciform DNA. The polypeptide is Holliday junction branch migration complex subunit RuvA (Kosmotoga olearia (strain ATCC BAA-1733 / DSM 21960 / TBF 19.5.1)).